We begin with the raw amino-acid sequence, 80 residues long: Late expression factor 10 (80 aa).

It belongs to the baculoviridae LEF-10 family.

Functionally, involved in late/very late gene activation. In Orgyia pseudotsugata multicapsid polyhedrosis virus (OpMNPV), this protein is Late expression factor 10 (LEF-10).